We begin with the raw amino-acid sequence, 396 residues long: 12-oxophytodienoate reductase 3 (396 aa).

Residues 31–33, glycine 64, and glutamine 106 contribute to the FMN site; that span reads PMT. 185–188 contributes to the substrate binding site; it reads HGAH. Tyrosine 190 serves as the catalytic Proton donor. Arginine 237 is an FMN binding site. Arginine 283 is a binding site for substrate. Residues glycine 321 and 342–343 contribute to the FMN site; that span reads GR. Residues 342–343 are FMN; sequence GR. Residues 394–396 carry the Microbody targeting signal motif; that stretch reads SRL.

Belongs to the NADH:flavin oxidoreductase/NADH oxidase family. Requires FMN as cofactor. Expressed in roots and to a lower extent in leaves and flowers.

The protein localises to the peroxisome. It carries out the reaction (1S,2S)-OPC-8 + NADP(+) = (9S,13S,15Z)-12-oxophyto-10,15-dienoate + NADPH + H(+). It functions in the pathway lipid metabolism; oxylipin biosynthesis. Functionally, specifically cleaves olefinic bonds in cyclic enones. Involved in the biosynthesis of jasmonic acid (JA) and perhaps in biosynthesis or metabolism of other oxylipin signaling moleclules. It is required for the spatial and temporal regulation of JA levels during dehiscence of anthers, promoting the stomium degeneration program. In vitro, reduces 9S,13S-12-oxophytodienoic acid (9S,13S-OPDA) and 9R,13R-OPDA to 9S,13S-OPC-8:0 and 9R,13R-OPC-8:0, respectively. This chain is 12-oxophytodienoate reductase 3 (OPR3), found in Solanum lycopersicum (Tomato).